The chain runs to 617 residues: Protein DWARF AND LOW-TILLERING (617 aa).

2 disordered regions span residues 29–92 (KRGS…HDED) and 159–206 (PSLA…GVPA). The span at 171-187 (KSPSDSSSSSGTDGGSS) shows a compositional bias: low complexity. The 387-residue stretch at 208–594 (GQAEREALEL…QPLYTVTAWT (387 aa)) folds into the GRAS domain. The interval 215–295 (LELVRALTAC…LTDDAFGGGD (81 aa)) is leucine repeat I (LRI). Residues 301–366 (LRILNAITPI…VPPAHVRITG (66 aa)) form a VHIID region. A VHIID motif is present at residues 332–336 (VHVID). The interval 376 to 408 (ETGARLARVAAALGLAFEFHAVVDRLEDVRLWM) is leucine repeat II (LRII). A PFYRE region spans residues 417–508 (VAVNCVLAMH…EEMFAREIRN (92 aa)). The SAW stretch occupies residues 511–594 (AFEGPERFER…QPLYTVTAWT (84 aa)). The tract at residues 596 to 617 (AGDGAGGSTVSASTTASHSQQS) is disordered. Positions 603–617 (STVSASTTASHSQQS) are enriched in low complexity.

It belongs to the GRAS family. As to quaternary structure, interacts with GSK2. Interacts with SMOS1 (via C-terminus). Phosphorylated on serine and threonine residues by GSK2. Dephosphorylated during response to brassinosteroid. As to expression, expressed in the shoot apical meristem (SAM) and elongating cells of young seedlings. Expressed in leaf joints, culms, internodes, stems, young panicles, primary roots and lateral roots.

It is found in the nucleus. In terms of biological role, probable transcription factor that acts as a positive regulator of brassinosteroid (BR) signaling. Functions downstream of BRI1 and GSK2 to modulate BR responses. Acts as a direct target of GSK2 kinase to mediate BR responses. Involved in feedback inhibition of BR biosynthetic genes. Repressed by BZR1. Cooperatively functions in a transactivating complex with SMOS1 to enhance the transcription of the SMOS1 target PHI-1, and regulate plant organ size. Interaction between SMOS1 and DLT is a crosstalk point for auxin and brassinosteroid signaling. This Oryza sativa subsp. japonica (Rice) protein is Protein DWARF AND LOW-TILLERING.